A 797-amino-acid chain; its full sequence is MVQNNESVFFVECDSYKESPSTSPIRLDDLDGNDAVSDQGLAFDGDVGITSQARVRNPRAQIFEDSNTDVVLHLDDLDMVPLNTKFDMQMEMGSPMAMPAETPPPVEPLKTKDLAYSSLAHLPSYFFEQTHFRIDRKCLLEMSKLRRNYLTISKQDALSCPQLHSRVAGGYLKPVKEKLFGIRHFLDLEESNTVNLLQDGNYMTELFNSQINIPTFKEFREDFEWCLKIIRDRSLSRFSEKRLQYLVNKFPVFQHLHSKEEMRQSKKVPHKDFYNCRKIDLNLLLSGCFSQWQLTEFIWTKLRKEPDRVIHQAFNGSHITLSQLFKVNFEETGQFFNGLKIIDDSFLEWYKVIYLAKYHLVNDEMEIHTGSHGKQLRYYLIAKTFLEFDNYINGEYLAELLKTFLIKPQEESKYQLCQLSVDFQFYLHYDNSDVDNWWMVFANWLNHYNIFSNNIRWNIRISRIYPELYHTGKVKNFQEYLNLIFKPLFNAENYLHKSLGPILLKFLSQVSSIDLCIQDTDNYIWKNFTAVSCLPKDWTSGGDNPTISQYMYYVYVNLTKLNHIRQALHQNTFTLRSSCSPTSMNRTSQFSNTLNFTEHTEAILNNFLLACGGFLNAENLWNAPPSLVYLFYLSQIPMVVAPLNSIVDSKPTMLQEQAPTGLVLEPSKPYKKNPFMKFFEMGFKISLSSESILYNNSYTKEPIIEEYSVAASIYRLHSADLCELLRNSVITSGFSSTLKNKWLGVSLASHDYFVENTGFVDKWYDCKPNTSLEHNVPIIRRQYRSSTLAGEWRLIIA.

The chain crosses the membrane as a helical span at residues 627 to 647 (LVYLFYLSQIPMVVAPLNSIV).

This sequence belongs to the metallo-dependent hydrolases superfamily. Adenosine and AMP deaminases family.

It is found in the membrane. This Saccharomyces cerevisiae (strain ATCC 204508 / S288c) (Baker's yeast) protein is Inactive deaminase YBR284W.